A 174-amino-acid chain; its full sequence is Urease accessory protein UreE (174 aa).

Belongs to the UreE family.

The protein localises to the cytoplasm. Its function is as follows. Involved in urease metallocenter assembly. Binds nickel. Probably functions as a nickel donor during metallocenter assembly. This Helicobacter hepaticus (strain ATCC 51449 / 3B1) protein is Urease accessory protein UreE.